Here is a 637-residue protein sequence, read N- to C-terminus: Sodium-dependent nutrient amino acid transporter 1 (637 aa).

Residues 1–17 (MELKTMPQNGANAGTQH) show a composition bias toward polar residues. The disordered stretch occupies residues 1–39 (MELKTMPQNGANAGTQHNNNSNNKPDNNEKEAQKKEPER). The Cytoplasmic segment spans residues 1 to 47 (MELKTMPQNGANAGTQHNNNSNNKPDNNEKEAQKKEPERTNWSNGLE). Positions 26–39 (DNNEKEAQKKEPER) are enriched in basic and acidic residues. Transmembrane regions (helical) follow at residues 48-68 (FLMS…FPFT), 75-95 (GAFL…MYYL), and 128-148 (TICI…YLFV). N-linked (GlcNAc...) asparagine glycans are attached at residues Asn181 and Asn195. 9 consecutive transmembrane segments (helical) span residues 225–245 (PDWK…LVIM), 254–274 (AAYF…GRAV), 303–323 (AVVQ…MFAS), 337–357 (IVTT…FAIL), 397–417 (LFSA…IVAL), 443–463 (ICGF…ILTL), 470–490 (TYVV…IYGL), 515–535 (FFTP…ISPI), and 549–569 (AGWV…WWYI).

The protein belongs to the sodium:neurotransmitter symporter (SNF) (TC 2.A.22) family.

It is found in the membrane. In terms of biological role, unusual broad substrate spectrum amino acid:sodium cotransporter that promotes absorption of the D isomers of essential amino acids. Neutral amino acids are the preferred substrates, especially methionine and phenylalanine. This chain is Sodium-dependent nutrient amino acid transporter 1, found in Drosophila virilis (Fruit fly).